The sequence spans 863 residues: MKLGWLEAAALTAASVASAQVKQDDLPVSPPYYPSPWSNGEGEWAEAYNRAVQIVSQMTLDEKVNLTTGTGMSEKCVGQTGSVPRLGINSICLQDGPLGIRFTDYNSAFPAGVNVAATWDRQLAYIRGHAMGQEFSDKGIDVQLGPAAGPLGRFPDGGRNWEGFSPDPVLSGVLFAETIKGIQDAGVIATAKHYLLNEQEHFRQVPEANGYGYNITETLSENVDDKTLHELYLWPFADAVRAGVGAIMCSYQHLNNTQACQNSHLLNKLLKAELGFQGFVMSDWSATHSGVGSALAGMDMTMPGDIAFNDGLSYYGPNLTISVLNGTVPQWRVDDMAVRVMAAFYKVGRDRLATPPNFSSWTRAEKGYEHASIDGGAYGTVNEFVDVQQDHASLIRRVGADSIVLLKNEGSLPLTGKERNVAILGEDAGSNPYGANGCDDRGCAQGTLAMGWGSGTANFPYLVTPEQAIQQEVLKGRGNVFAVTDNWALDKVNKTASESTVSLVFVNAGAGEGFISVDGNEGDRKNLTLWKNGENLIKAAASNCNNTIVVIHSVGAVLVDQFYEHPNVTAILWAGLPGQESGNSLVDVLYGRVNPNGKSPFTWGKTREAYGAPLLTEANNGNGAPQTDHTEGVFIDYRHFDRTNQTPIYEFGHGLSYTTFKYSNLTVQKLNAPAYSPASGQTKAAPTFGTIGEAEDYVFPDSITRVREFIYPWINSTDLKESSGDPNYGWDDEDYIPEGAKDGSPQDVLPSGGGAGGNPRLYDDLFRITAIIKNTGPVAGTEVPQLYVSLGGPNEPKVVLRGFDKLVIQPGEERVFTTTLTRRDLSNWDMEKDDWVITSYPKKVFVGSSSRKLPLRASLPAVQ.

Residues 1-19 (MKLGWLEAAALTAASVASA) form the signal peptide. 3 N-linked (GlcNAc...) asparagine glycosylation sites follow: N65, N214, and N255. D283 is an active-site residue. N-linked (GlcNAc...) asparagine glycosylation is found at N318, N325, N357, N493, N526, N545, N567, N664, and N715. Residues 720 to 754 (KESSGDPNYGWDDEDYIPEGAKDGSPQDVLPSGGG) are disordered.

The protein belongs to the glycosyl hydrolase 3 family.

It localises to the secreted. The catalysed reaction is Hydrolysis of terminal, non-reducing beta-D-glucosyl residues with release of beta-D-glucose.. The protein operates within glycan metabolism; cellulose degradation. In terms of biological role, beta-glucosidases are one of a number of cellulolytic enzymes involved in the degradation of cellulosic biomass. Catalyzes the last step releasing glucose from the inhibitory cellobiose. This Emericella nidulans (strain FGSC A4 / ATCC 38163 / CBS 112.46 / NRRL 194 / M139) (Aspergillus nidulans) protein is Probable beta-glucosidase A (bglA).